Reading from the N-terminus, the 413-residue chain is Divalent metal cation transporter MntH (413 aa).

Residues 1–19 (MTDNRVENSSGRAARKLRL) lie on the Cytoplasmic side of the membrane. A helical membrane pass occupies residues 20–39 (ALMGPAFIAAIGYIDPGNFA). Topologically, residues 40–51 (TNIQAGASFGYQ) are periplasmic. Residues 52–71 (LLWVVVWANLMAMLIQILSA) traverse the membrane as a helical segment. Over 72–95 (KLGIATGKNLAEQIRDHYPRPVVW) the chain is Cytoplasmic. Residues 96-118 (FYWVQAEIIAMATDLAEFIGAAI) form a helical membrane-spanning segment. Residues 119 to 125 (GFKLILG) lie on the Periplasmic side of the membrane. The chain crosses the membrane as a helical span at residues 126 to 145 (VSLLQGAVLTGIATFLILML). The Cytoplasmic portion of the chain corresponds to 146–155 (QRRGQKPLEK). Residues 156 to 175 (VIGGLLLFVAAAYIVELFFS) traverse the membrane as a helical segment. The Periplasmic segment spans residues 176 to 196 (QPDMAQLGKGMVIPALPNPEA). The chain crosses the membrane as a helical span at residues 197 to 220 (VFLAAGVLGATIMPHVIYLHSSLT). Residues 221 to 238 (QHLHGGTRQQRYSATKWD) are Cytoplasmic-facing. A helical membrane pass occupies residues 239 to 258 (VAIAMTIAGFVNLAMMATAA). Over 259–276 (AAFHFSGHTGIADLDQAY) the chain is Periplasmic. Residues 277–297 (LTLEPLLSHAAATVFGLSLVA) form a helical membrane-spanning segment. Topologically, residues 298 to 327 (AGLSSTVVGTLAGQVVMQGFVRFHIPLWVR) are cytoplasmic. Residues 328–344 (RTITMLPSFIVILMGLD) form a helical membrane-spanning segment. At 345 to 350 (PTRILV) the chain is on the periplasmic side. Residues 351–370 (MSQVLLSFGIALALVPLLIF) traverse the membrane as a helical segment. Over 371 to 387 (TSNATLMGELVNTRRVK) the chain is Cytoplasmic. A helical membrane pass occupies residues 388–406 (QVGWIIVVLVVALNIWLLV). The Periplasmic portion of the chain corresponds to 407–413 (GTVMGLS).

This sequence belongs to the NRAMP family.

Its subcellular location is the cell inner membrane. H(+)-stimulated, divalent metal cation uptake system. The protein is Divalent metal cation transporter MntH of Salmonella paratyphi C (strain RKS4594).